The primary structure comprises 187 residues: Crossover junction endodeoxyribonuclease RuvC (187 aa).

Residues Asp7, Glu67, and Asp140 contribute to the active site. The Mg(2+) site is built by Asp7, Glu67, and Asp140.

This sequence belongs to the RuvC family. As to quaternary structure, homodimer which binds Holliday junction (HJ) DNA. The HJ becomes 2-fold symmetrical on binding to RuvC with unstacked arms; it has a different conformation from HJ DNA in complex with RuvA. In the full resolvosome a probable DNA-RuvA(4)-RuvB(12)-RuvC(2) complex forms which resolves the HJ. Mg(2+) is required as a cofactor.

The protein resides in the cytoplasm. It catalyses the reaction Endonucleolytic cleavage at a junction such as a reciprocal single-stranded crossover between two homologous DNA duplexes (Holliday junction).. In terms of biological role, the RuvA-RuvB-RuvC complex processes Holliday junction (HJ) DNA during genetic recombination and DNA repair. Endonuclease that resolves HJ intermediates. Cleaves cruciform DNA by making single-stranded nicks across the HJ at symmetrical positions within the homologous arms, yielding a 5'-phosphate and a 3'-hydroxyl group; requires a central core of homology in the junction. The consensus cleavage sequence is 5'-(A/T)TT(C/G)-3'. Cleavage occurs on the 3'-side of the TT dinucleotide at the point of strand exchange. HJ branch migration catalyzed by RuvA-RuvB allows RuvC to scan DNA until it finds its consensus sequence, where it cleaves and resolves the cruciform DNA. The chain is Crossover junction endodeoxyribonuclease RuvC from Prosthecochloris aestuarii (strain DSM 271 / SK 413).